The following is an 89-amino-acid chain: MANHKSAEKRIRQTIKRTERNRFYKTKIKNIIKAVREAVAVNDVAKAQERLKIANKELHKFVSKGILKKNTASRKVSRLNASVKKIALA.

This sequence belongs to the bacterial ribosomal protein bS20 family.

In terms of biological role, binds directly to 16S ribosomal RNA. The polypeptide is Small ribosomal subunit protein bS20 (Helicobacter pylori (strain ATCC 700392 / 26695) (Campylobacter pylori)).